Here is a 1603-residue protein sequence, read N- to C-terminus: Vitellogenin-4 (1603 aa).

The N-terminal stretch at 1–15 (MKSIIIASLVALAIA) is a signal peptide. The Vitellogenin domain occupies 24–685 (FSPKSEYVYK…EKNAFLPKEV (662 aa)). N-linked (GlcNAc...) asparagine glycosylation occurs at Asn1266. Positions 1306-1475 (ATCKVDQSEV…SYLLKNEECE (170 aa)) constitute a VWFD domain. 2 disulfides stabilise this stretch: Cys1308/Cys1438 and Cys1330/Cys1474.

As to expression, expressed in the intestine of adult hermaphrodites.

Its subcellular location is the secreted. Functionally, precursor of the egg-yolk proteins that are sources of nutrients during embryonic development. Together with other vitellogenins, may play a role in modulating life-span, acting via induction of autophagy and lysosomal lipolysis. In Caenorhabditis elegans, this protein is Vitellogenin-4 (vit-4).